A 652-amino-acid polypeptide reads, in one-letter code: DNA ligase (652 aa).

Residues 29 to 33 (DSEYD), 78 to 79 (SL), and Glu-107 each bind NAD(+). Residue Lys-109 is the N6-AMP-lysine intermediate of the active site. NAD(+) contacts are provided by Arg-130, Glu-164, Lys-278, and Lys-302. Zn(2+)-binding residues include Cys-395, Cys-398, Cys-413, and Cys-418. In terms of domain architecture, BRCT spans 577–652 (VADAALSGLT…VRDEAWLESL (76 aa)).

It belongs to the NAD-dependent DNA ligase family. LigA subfamily. Mg(2+) serves as cofactor. Mn(2+) is required as a cofactor.

The catalysed reaction is NAD(+) + (deoxyribonucleotide)n-3'-hydroxyl + 5'-phospho-(deoxyribonucleotide)m = (deoxyribonucleotide)n+m + AMP + beta-nicotinamide D-nucleotide.. DNA ligase that catalyzes the formation of phosphodiester linkages between 5'-phosphoryl and 3'-hydroxyl groups in double-stranded DNA using NAD as a coenzyme and as the energy source for the reaction. It is essential for DNA replication and repair of damaged DNA. The protein is DNA ligase of Streptococcus pneumoniae (strain P1031).